Reading from the N-terminus, the 514-residue chain is 23S rRNA (uracil(1939)-C(5))-methyltransferase RlmD (514 aa).

Residues Cys-70, Cys-76, Cys-79, and Cys-158 each coordinate [4Fe-4S] cluster. S-adenosyl-L-methionine is bound by residues Gln-272, Phe-301, Asn-306, Glu-322, Asn-350, and Asp-371. Cys-398 acts as the Nucleophile in catalysis.

The protein belongs to the class I-like SAM-binding methyltransferase superfamily. RNA M5U methyltransferase family. RlmD subfamily.

It catalyses the reaction uridine(1939) in 23S rRNA + S-adenosyl-L-methionine = 5-methyluridine(1939) in 23S rRNA + S-adenosyl-L-homocysteine + H(+). Its function is as follows. Catalyzes the formation of 5-methyl-uridine at position 1939 (m5U1939) in 23S rRNA. This chain is 23S rRNA (uracil(1939)-C(5))-methyltransferase RlmD, found in Chromobacterium violaceum (strain ATCC 12472 / DSM 30191 / JCM 1249 / CCUG 213 / NBRC 12614 / NCIMB 9131 / NCTC 9757 / MK).